Reading from the N-terminus, the 229-residue chain is Sugar fermentation stimulation protein homolog (229 aa).

The protein belongs to the SfsA family.

The chain is Sugar fermentation stimulation protein homolog from Carboxydothermus hydrogenoformans (strain ATCC BAA-161 / DSM 6008 / Z-2901).